Here is a 239-residue protein sequence, read N- to C-terminus: Chaperone protein PapD (239 aa).

The first 21 residues, 1–21 (MIRKKILMAAIPLFVISGADA), serve as a signal peptide directing secretion. A disulfide bond links C228 and C233.

It belongs to the periplasmic pilus chaperone family. As to quaternary structure, interacts with substrates PapG and PapK.

Its subcellular location is the periplasm. Binds and caps interactive surfaces on P pilus subunits to prevent them from participating in non-productive interactions. Facilitates the import of P pilus subunits into the periplasm, probably also facilitates their folding. Chaperone-subunit complexes are then targeted to the PapC outer membrane usher where the chaperone must uncap from the subunits. Coexpression of this chaperone with individual, otherwise toxic, P pilus subunits (tested with PapA, PapE and PapG) suppresses their growth inhibitory phenotype. This is Chaperone protein PapD (papD) from Escherichia coli.